Consider the following 278-residue polypeptide: uncharacterized protein (278 aa).

Its subcellular location is the cytoplasm. The protein localises to the nucleus. Functionally, probable methyltransferase. This is an uncharacterized protein from Schizosaccharomyces pombe (strain 972 / ATCC 24843) (Fission yeast).